The chain runs to 334 residues: Oligopeptide transport ATP-binding protein OppF (334 aa).

The ABC transporter domain occupies 12-265; it reads LEIADLKVHF…PLHPYTRALM (254 aa). Residue 57–64 coordinates ATP; it reads GESGCGKS.

Belongs to the ABC transporter superfamily. As to quaternary structure, the complex is composed of two ATP-binding proteins (OppD and OppF), two transmembrane proteins (OppB and OppC) and a solute-binding protein (OppA or MppA).

The protein localises to the cell inner membrane. It catalyses the reaction a [peptide](out) + ATP + H2O = a [peptide](in) + ADP + phosphate + H(+). The enzyme catalyses L-alanyl-gamma-D-glutamyl-meso-2,6-diaminopimelate(out) + ATP + H2O = L-alanyl-gamma-D-glutamyl-meso-2,6-diaminopimelate(in) + ADP + phosphate + H(+). Its function is as follows. Part of the ABC transporter complex OppABCDF involved in the uptake of oligopeptides and of the ABC transporter complex MppA-OppBCDF involved in the uptake of the cell wall murein tripeptide L-alanyl-gamma-D-glutamyl-meso-diaminopimelate. Probably responsible for energy coupling to the transport system. Plays an important nutritional role and is involved in the recycling of cell wall peptides. The sequence is that of Oligopeptide transport ATP-binding protein OppF (oppF) from Escherichia coli (strain K12).